Reading from the N-terminus, the 213-residue chain is Orotate phosphoribosyltransferase (213 aa).

Lysine 26 contributes to the 5-phospho-alpha-D-ribose 1-diphosphate binding site. 34 to 35 (FF) provides a ligand contact to orotate. Residues 72–73 (YK), arginine 99, lysine 100, lysine 103, histidine 105, and 124–132 (DDVITAGTA) each bind 5-phospho-alpha-D-ribose 1-diphosphate. 2 residues coordinate orotate: threonine 128 and arginine 156.

Belongs to the purine/pyrimidine phosphoribosyltransferase family. PyrE subfamily. As to quaternary structure, homodimer. Mg(2+) is required as a cofactor.

The catalysed reaction is orotidine 5'-phosphate + diphosphate = orotate + 5-phospho-alpha-D-ribose 1-diphosphate. Its pathway is pyrimidine metabolism; UMP biosynthesis via de novo pathway; UMP from orotate: step 1/2. Its function is as follows. Catalyzes the transfer of a ribosyl phosphate group from 5-phosphoribose 1-diphosphate to orotate, leading to the formation of orotidine monophosphate (OMP). In Klebsiella pneumoniae subsp. pneumoniae (strain ATCC 700721 / MGH 78578), this protein is Orotate phosphoribosyltransferase.